A 617-amino-acid chain; its full sequence is Chaperone protein HscA homolog (617 aa).

The interval 1-23 (MALLQIAEPGQSSAPHEHKRAAG) is disordered.

The protein belongs to the heat shock protein 70 family.

In terms of biological role, chaperone involved in the maturation of iron-sulfur cluster-containing proteins. Has a low intrinsic ATPase activity which is markedly stimulated by HscB. This Vibrio vulnificus (strain YJ016) protein is Chaperone protein HscA homolog.